The sequence spans 326 residues: GTP 3',8-cyclase (326 aa).

The 226-residue stretch at 7–232 (GFGRSFPYLR…PRAADAGPAR (226 aa)) folds into the Radical SAM core domain. Arginine 16 contacts GTP. [4Fe-4S] cluster is bound by residues cysteine 23 and cysteine 27. Tyrosine 29 lines the S-adenosyl-L-methionine pocket. [4Fe-4S] cluster is bound at residue cysteine 30. GTP is bound at residue arginine 65. Glycine 69 contacts S-adenosyl-L-methionine. A GTP-binding site is contributed by threonine 96. Serine 120 serves as a coordination point for S-adenosyl-L-methionine. A GTP-binding site is contributed by lysine 157. Methionine 191 is a binding site for S-adenosyl-L-methionine. Positions 254 and 257 each coordinate [4Fe-4S] cluster. 259–261 (RLR) contributes to the GTP binding site. Cysteine 271 provides a ligand contact to [4Fe-4S] cluster.

This sequence belongs to the radical SAM superfamily. MoaA family. In terms of assembly, monomer and homodimer. The cofactor is [4Fe-4S] cluster.

It carries out the reaction GTP + AH2 + S-adenosyl-L-methionine = (8S)-3',8-cyclo-7,8-dihydroguanosine 5'-triphosphate + 5'-deoxyadenosine + L-methionine + A + H(+). Its pathway is cofactor biosynthesis; molybdopterin biosynthesis. Functionally, catalyzes the cyclization of GTP to (8S)-3',8-cyclo-7,8-dihydroguanosine 5'-triphosphate. The polypeptide is GTP 3',8-cyclase (Stenotrophomonas maltophilia (strain R551-3)).